The sequence spans 917 residues: Translation initiation factor IF-2 (917 aa).

The tract at residues 1-312 (MEEQKSIKET…KGGREENENT (312 aa)) is disordered. Residues 20 to 30 (TKKKLVIKKKA) are compositionally biased toward basic residues. Polar residues predominate over residues 41 to 59 (PGAQGQTTATEAKQSSPAS). Basic and acidic residues-rich tracts occupy residues 60 to 76 (SDKKKDLNELIREEAKR) and 95 to 118 (RPDRKPEPLPQPDREKAPMDRKPE). 3 stretches are compositionally biased toward gly residues: residues 132–141 (SGGGQGGGNQ), 167–256 (QTGG…GYQG), and 281–293 (APGGLPGAGGPGG). Residues 297–312 (RVFDKEKGGREENENT) are compositionally biased toward basic and acidic residues. The region spanning 414–587 (TRPPVVTIMG…ELLDHKANPK (174 aa)) is the tr-type G domain. Positions 423-430 (GHVDHGKT) are G1. 423–430 (GHVDHGKT) provides a ligand contact to GTP. The interval 448–452 (GITQH) is G2. The tract at residues 469–472 (DTPG) is G3. GTP contacts are provided by residues 469–473 (DTPGH) and 523–526 (NKID). The segment at 523–526 (NKID) is G4. The tract at residues 559–561 (SAK) is G5.

This sequence belongs to the TRAFAC class translation factor GTPase superfamily. Classic translation factor GTPase family. IF-2 subfamily.

It is found in the cytoplasm. In terms of biological role, one of the essential components for the initiation of protein synthesis. Protects formylmethionyl-tRNA from spontaneous hydrolysis and promotes its binding to the 30S ribosomal subunits. Also involved in the hydrolysis of GTP during the formation of the 70S ribosomal complex. In Leptospira biflexa serovar Patoc (strain Patoc 1 / ATCC 23582 / Paris), this protein is Translation initiation factor IF-2.